Reading from the N-terminus, the 213-residue chain is 3,4-dihydroxy-2-butanone 4-phosphate synthase (213 aa).

D-ribulose 5-phosphate contacts are provided by residues 37 to 38 (RE), D42, 150 to 154 (RPGHT), and E174. E38 provides a ligand contact to Mg(2+). H153 lines the Mg(2+) pocket.

This sequence belongs to the DHBP synthase family. Homodimer. Requires Mg(2+) as cofactor. Mn(2+) is required as a cofactor.

It catalyses the reaction D-ribulose 5-phosphate = (2S)-2-hydroxy-3-oxobutyl phosphate + formate + H(+). Its pathway is cofactor biosynthesis; riboflavin biosynthesis; 2-hydroxy-3-oxobutyl phosphate from D-ribulose 5-phosphate: step 1/1. In terms of biological role, catalyzes the conversion of D-ribulose 5-phosphate to formate and 3,4-dihydroxy-2-butanone 4-phosphate. The chain is 3,4-dihydroxy-2-butanone 4-phosphate synthase from Clostridium botulinum (strain ATCC 19397 / Type A).